A 44-amino-acid chain; its full sequence is uncharacterized protein (44 aa).

A helical transmembrane segment spans residues 4–24; it reads ISSILIRGGGVLIVVILLLWI.

The protein resides in the membrane. This is an uncharacterized protein from Ornithodoros (relapsing fever ticks).